The sequence spans 258 residues: 5'-nucleotidase SurE (258 aa).

A divalent metal cation is bound by residues Asp-14, Asp-15, Ser-45, and Asn-101.

This sequence belongs to the SurE nucleotidase family. A divalent metal cation is required as a cofactor.

Its subcellular location is the cytoplasm. The catalysed reaction is a ribonucleoside 5'-phosphate + H2O = a ribonucleoside + phosphate. Functionally, nucleotidase that shows phosphatase activity on nucleoside 5'-monophosphates. This chain is 5'-nucleotidase SurE, found in Chlorobium phaeobacteroides (strain DSM 266 / SMG 266 / 2430).